The primary structure comprises 391 residues: Phosphoglycerate kinase (391 aa).

Substrate is bound by residues 21–23 (DLN), arginine 36, 59–62 (HLGR), arginine 113, and arginine 146. Residues lysine 197, glutamate 319, and 345–348 (GGDT) contribute to the ATP site.

Belongs to the phosphoglycerate kinase family. As to quaternary structure, monomer.

It is found in the cytoplasm. The enzyme catalyses (2R)-3-phosphoglycerate + ATP = (2R)-3-phospho-glyceroyl phosphate + ADP. Its pathway is carbohydrate degradation; glycolysis; pyruvate from D-glyceraldehyde 3-phosphate: step 2/5. This is Phosphoglycerate kinase from Shewanella baltica (strain OS223).